A 354-amino-acid polypeptide reads, in one-letter code: Biotin synthase (354 aa).

Residues 40-258 (NEVQVSTLLS…IAVARILMPR (219 aa)) form the Radical SAM core domain. Residues Cys55, Cys59, and Cys62 each contribute to the [4Fe-4S] cluster site. Residues Cys99, Cys130, Cys190, and Arg262 each contribute to the [2Fe-2S] cluster site.

This sequence belongs to the radical SAM superfamily. Biotin synthase family. As to quaternary structure, homodimer. Requires [4Fe-4S] cluster as cofactor. [2Fe-2S] cluster is required as a cofactor.

The enzyme catalyses (4R,5S)-dethiobiotin + (sulfur carrier)-SH + 2 reduced [2Fe-2S]-[ferredoxin] + 2 S-adenosyl-L-methionine = (sulfur carrier)-H + biotin + 2 5'-deoxyadenosine + 2 L-methionine + 2 oxidized [2Fe-2S]-[ferredoxin]. The protein operates within cofactor biosynthesis; biotin biosynthesis; biotin from 7,8-diaminononanoate: step 2/2. In terms of biological role, catalyzes the conversion of dethiobiotin (DTB) to biotin by the insertion of a sulfur atom into dethiobiotin via a radical-based mechanism. The chain is Biotin synthase from Hahella chejuensis (strain KCTC 2396).